The following is a 540-amino-acid chain: Decreased expression in renal and prostate cancer protein (540 aa).

Residues 1 to 12 (MKEPRIFPRERP) show a composition bias toward basic and acidic residues. 2 disordered regions span residues 1 to 264 (MKEP…DARA) and 304 to 389 (SQAS…AFSQ). 2 stretches are compositionally biased toward low complexity: residues 113 to 125 (PRPG…SPGS) and 180 to 192 (GPSL…LTPG). The segment covering 304–316 (SQASGNMGTSPSS) has biased composition (polar residues). S313 carries the post-translational modification Phosphoserine. Positions 321–330 (PGPIGPNSGP) are enriched in low complexity. Residue R375 is modified to Asymmetric dimethylarginine. Residue R403 is modified to Omega-N-methylarginine. S439 carries the phosphoserine modification. The segment at 516 to 540 (GTNPAAFPRPGGPMAAMYPNGMLPP) is disordered.

Belongs to the DERPC family.

It is found in the nucleus. Potential tumor suppressor. The sequence is that of Decreased expression in renal and prostate cancer protein from Bos taurus (Bovine).